A 702-amino-acid polypeptide reads, in one-letter code: Polyribonucleotide nucleotidyltransferase (702 aa).

Mg(2+) contacts are provided by Asp487 and Asp493. The region spanning 554–613 (PRLLTIKIHPDKIREVIGKGGSTIQAITKETGTQIDIQDDGTIVIASVNAIAAQAAKARI) is the KH domain. The S1 motif domain occupies 623–691 (GRIYEGKVAK…KQGRIRLSMK (69 aa)).

This sequence belongs to the polyribonucleotide nucleotidyltransferase family. As to quaternary structure, component of the RNA degradosome, which is a multiprotein complex involved in RNA processing and mRNA degradation. It depends on Mg(2+) as a cofactor.

Its subcellular location is the cytoplasm. It catalyses the reaction RNA(n+1) + phosphate = RNA(n) + a ribonucleoside 5'-diphosphate. Its function is as follows. Involved in mRNA degradation. Catalyzes the phosphorolysis of single-stranded polyribonucleotides processively in the 3'- to 5'-direction. This Stenotrophomonas maltophilia (strain R551-3) protein is Polyribonucleotide nucleotidyltransferase.